The primary structure comprises 202 residues: Small ribosomal subunit protein uS4c (202 aa).

Positions 90–153 constitute an S4 RNA-binding domain; sequence MRLDNVIFRL…KSEAIISKNI (64 aa).

This sequence belongs to the universal ribosomal protein uS4 family. As to quaternary structure, part of the 30S ribosomal subunit. Contacts protein S5. The interaction surface between S4 and S5 is involved in control of translational fidelity.

The protein resides in the plastid. The protein localises to the chloroplast. Its function is as follows. One of the primary rRNA binding proteins, it binds directly to 16S rRNA where it nucleates assembly of the body of the 30S subunit. Functionally, with S5 and S12 plays an important role in translational accuracy. The polypeptide is Small ribosomal subunit protein uS4c (rps4) (Cyathophorum bulbosum (Moss)).